The sequence spans 304 residues: D-alanine--D-alanine ligase (304 aa).

The ATP-grasp domain maps to 104-299 (KMVWLSCGLP…FEALCLAILA (196 aa)). 130–185 (ARDLGLPIFVKPVHEGSSMGATKVTEAGQLRAAWELAARYDSLVIAEEFISGQELT) is an ATP binding site. Asp253, Glu266, and Asn268 together coordinate Mg(2+).

This sequence belongs to the D-alanine--D-alanine ligase family. It depends on Mg(2+) as a cofactor. Mn(2+) serves as cofactor.

It is found in the cytoplasm. It carries out the reaction 2 D-alanine + ATP = D-alanyl-D-alanine + ADP + phosphate + H(+). It functions in the pathway cell wall biogenesis; peptidoglycan biosynthesis. Cell wall formation. This is D-alanine--D-alanine ligase from Azoarcus sp. (strain BH72).